We begin with the raw amino-acid sequence, 447 residues long: uncharacterized protein (447 aa).

Helical transmembrane passes span V380 to T400 and I412 to V432.

The protein localises to the cell membrane. This is an uncharacterized protein from Methanocaldococcus jannaschii (strain ATCC 43067 / DSM 2661 / JAL-1 / JCM 10045 / NBRC 100440) (Methanococcus jannaschii).